Here is a 231-residue protein sequence, read N- to C-terminus: PQKLGLPVGRHVYVCASIGGKLCMRAYTPTSPVDEVGHFDLLIKIYFKDEDPKYPNGGLMSQYLDSLPLGATIDIKGPHRHIEYTGRRRFVVNGKQRHARRLAMIQAGRGTTPDDDTEQAVLRDQPDDDTEMHLVYANRTDHDMLLREEIDRAWLPRTRRLKVWYVVSKVPEDGWEYGVGRVDEHVMREHLPLGDSETIALVCGPPAMIECTVRPGLEKMGYDLDKACLVF.

Residues 1 to 85 (PQKLGLPVGR…KGPHRHIEYT (85 aa)) form the FAD-binding FR-type domain. Residues 25-28 (RAYT), 42-46 (LIKIY), Phe47, 59-61 (LMS), and Thr112 contribute to the FAD site.

This sequence belongs to the nitrate reductase family. As to quaternary structure, homodimer. It depends on FAD as a cofactor. Heme is required as a cofactor. The cofactor is Mo-molybdopterin.

The catalysed reaction is nitrite + NAD(+) + H2O = nitrate + NADH + H(+). The enzyme catalyses nitrite + NADP(+) + H2O = nitrate + NADPH + H(+). Its function is as follows. Nitrate reductase is a key enzyme involved in the first step of nitrate assimilation in plants, fungi and bacteria. The chain is Nitrate reductase [NAD(P)H] (NAR) from Zea mays (Maize).